Here is a 239-residue protein sequence, read N- to C-terminus: Immunoglobulin superfamily member 23 (239 aa).

The segment at glutamate 63–asparagine 93 is disordered. Residues proline 94 to serine 179 enclose the Ig-like domain. A helical transmembrane segment spans residues leucine 214 to leucine 234.

Its subcellular location is the cell membrane. In terms of biological role, may be involved in osteoclast differentiation. This is Immunoglobulin superfamily member 23 from Mus musculus (Mouse).